Here is a 474-residue protein sequence, read N- to C-terminus: MHSPFLTPGSRSQLDNLALLQLRRDQTIPTILQLHDEKNGGYKEGKVTNTRFGSFPHITLCDQPWGSQIIASKVDTGSRGRTQKMKRKADELDSSTQAEDKPSPQTPVAASSGFLHLLYPTPELWTASLPHRTQVVYTPDYSYILHRLRARPGSTVIEAGAGSGSFTHASVRAVFNGYPSDDQPTKKRRLGKVCSFEFHAQRAEKVRVEVNQHGLDGLVEVTHRDVYEDGFLLGDPKTGKSPKANAIFLDLPAPWLALKHLVRNPPEGTESPLDPTSPVYICTFSPCLEQVQRTISTLRQLGWLGISMVEVNNRRIEVKRERVGLDLGNIRGTVVFPKSVDEAVERTRALEERAQLFRATQNQSDGDSTPAPKAENEAKGGQQESEVPVYKQGRVMTRSELDLKNHTSYLVFAILPREWTEEDEKRCREKWPSNRVQEPQGPQKSKKQLKRESREKRDLQRKEQSQPETESQKE.

Residues 75-109 form a disordered region; the sequence is DTGSRGRTQKMKRKADELDSSTQAEDKPSPQTPVA. S-adenosyl-L-methionine contacts are provided by residues 163 to 165, Glu-197, Arg-202, 225 to 226, and Asp-250; these read SGS and DV. 2 disordered regions span residues 356–390 and 423–474; these read LFRATQNQSDGDSTPAPKAENEAKGGQQESEVPVY and DEKR…SQKE. Residues 358 to 367 show a composition bias toward polar residues; the sequence is RATQNQSDGD. Residues 423-432 show a composition bias toward basic and acidic residues; it reads DEKRCREKWP. Positions 434–443 are enriched in polar residues; it reads NRVQEPQGPQ. Residues 450 to 474 show a composition bias toward basic and acidic residues; that stretch reads KRESREKRDLQRKEQSQPETESQKE.

It belongs to the class I-like SAM-binding methyltransferase superfamily. TRM61 family. Heterotetramer; composed of two copies of TRM6 and two copies of TRM61.

Its subcellular location is the nucleus. It carries out the reaction adenosine(58) in tRNA + S-adenosyl-L-methionine = N(1)-methyladenosine(58) in tRNA + S-adenosyl-L-homocysteine + H(+). In terms of biological role, catalytic subunit of tRNA (adenine-N(1)-)-methyltransferase, which catalyzes the formation of N(1)-methyladenine at position 58 (m1A58) in initiator methionyl-tRNA. The polypeptide is tRNA (adenine(58)-N(1))-methyltransferase catalytic subunit trm61 (trm61) (Aspergillus oryzae (strain ATCC 42149 / RIB 40) (Yellow koji mold)).